The following is a 423-amino-acid chain: Probable WRKY transcription factor 58 (423 aa).

Disordered regions lie at residues 91–128 (SSAH…AVHG), 142–171 (RNHY…DGYN), and 215–284 (IYKG…GVST). Composition is skewed to low complexity over residues 99-111 (QPRQ…PQRP) and 144-162 (HYNN…VVNV). A DNA-binding region (WRKY 1) is located at residues 161–225 (NVDKPADDGY…YKGQHDHERP (65 aa)). The segment covering 259–271 (DDDDDDDEDDEDL) has biased composition (acidic residues). Positions 300 to 365 (SEVDLLDDGY…YEGKHNHDVP (66 aa)) form a DNA-binding region, WRKY 2.

It localises to the nucleus. Its function is as follows. Transcription factor. Interacts specifically with the W box (5'-(T)TGAC[CT]-3'), a frequently occurring elicitor-responsive cis-acting element. This is Probable WRKY transcription factor 58 (WRKY58) from Arabidopsis thaliana (Mouse-ear cress).